Consider the following 194-residue polypeptide: Probable RNA polymerase sigma factor HI_1459 (194 aa).

A Polymerase core binding motif is present at residues 45–58 (DLVQEAFLSAFKNL). A DNA-binding region (H-T-H motif) is located at residues 161–180 (SEEICQETHLTSSNLHTTLY).

Belongs to the sigma-70 factor family. ECF subfamily.

The protein is Probable RNA polymerase sigma factor HI_1459 of Haemophilus influenzae (strain ATCC 51907 / DSM 11121 / KW20 / Rd).